A 299-amino-acid polypeptide reads, in one-letter code: 4-diphosphocytidyl-2-C-methyl-D-erythritol kinase (299 aa).

K16 is a catalytic residue. P101–A111 lines the ATP pocket. The active site involves D143.

This sequence belongs to the GHMP kinase family. IspE subfamily.

It carries out the reaction 4-CDP-2-C-methyl-D-erythritol + ATP = 4-CDP-2-C-methyl-D-erythritol 2-phosphate + ADP + H(+). The protein operates within isoprenoid biosynthesis; isopentenyl diphosphate biosynthesis via DXP pathway; isopentenyl diphosphate from 1-deoxy-D-xylulose 5-phosphate: step 3/6. Its function is as follows. Catalyzes the phosphorylation of the position 2 hydroxy group of 4-diphosphocytidyl-2C-methyl-D-erythritol. This Rhodopseudomonas palustris (strain ATCC BAA-98 / CGA009) protein is 4-diphosphocytidyl-2-C-methyl-D-erythritol kinase.